A 535-amino-acid polypeptide reads, in one-letter code: Glucose-6-phosphate isomerase (535 aa).

Glutamate 359 serves as the catalytic Proton donor. Residues histidine 390 and lysine 505 contribute to the active site.

This sequence belongs to the GPI family.

Its subcellular location is the cytoplasm. It catalyses the reaction alpha-D-glucose 6-phosphate = beta-D-fructose 6-phosphate. It participates in carbohydrate biosynthesis; gluconeogenesis. It functions in the pathway carbohydrate degradation; glycolysis; D-glyceraldehyde 3-phosphate and glycerone phosphate from D-glucose: step 2/4. Its function is as follows. Catalyzes the reversible isomerization of glucose-6-phosphate to fructose-6-phosphate. The sequence is that of Glucose-6-phosphate isomerase from Treponema pallidum (strain Nichols).